Reading from the N-terminus, the 393-residue chain is tRNA-specific 2-thiouridylase MnmA (393 aa).

ATP is bound by residues 19-26 (AMSGGVDS) and Leu45. Cys113 functions as the Nucleophile in the catalytic mechanism. Cys113 and Cys210 are disulfide-bonded. Gly137 contributes to the ATP binding site. An interaction with tRNA region spans residues 160-162 (RDQ). Cys210 functions as the Cysteine persulfide intermediate in the catalytic mechanism.

Belongs to the MnmA/TRMU family.

The protein localises to the cytoplasm. It catalyses the reaction S-sulfanyl-L-cysteinyl-[protein] + uridine(34) in tRNA + AH2 + ATP = 2-thiouridine(34) in tRNA + L-cysteinyl-[protein] + A + AMP + diphosphate + H(+). Its function is as follows. Catalyzes the 2-thiolation of uridine at the wobble position (U34) of tRNA, leading to the formation of s(2)U34. In Bradyrhizobium diazoefficiens (strain JCM 10833 / BCRC 13528 / IAM 13628 / NBRC 14792 / USDA 110), this protein is tRNA-specific 2-thiouridylase MnmA.